The chain runs to 414 residues: Na(+)-translocating NADH-quinone reductase subunit B (414 aa).

Helical transmembrane passes span 23–40 (WFALYEAAATLFYTPGLV), 56–76 (IMIMVWFAVFPAMFWGMYNAG), 129–149 (FLPIYATVFLVGGFWEVLFCM), and 164–184 (ILFALIVPPTLPLWQAALGIT). An FMN phosphoryl threonine modification is found at Thr-236. A run of 5 helical transmembrane segments spans residues 268 to 288 (IPGSIGEVSTLALLIGAAMIV), 297 to 317 (IIAGVMIGMIVVSTLFNVIGS), 322 to 342 (MFSMPWHWHLVLGGFAFGMFF), 358 to 378 (WWYGILIGAMCVMIRVVNPAY), and 381 to 401 (GMMLAILFANLFAPLFDHLVV).

The protein belongs to the NqrB/RnfD family. In terms of assembly, composed of six subunits; NqrA, NqrB, NqrC, NqrD, NqrE and NqrF. The cofactor is FMN.

It is found in the cell inner membrane. It carries out the reaction a ubiquinone + n Na(+)(in) + NADH + H(+) = a ubiquinol + n Na(+)(out) + NAD(+). Its function is as follows. NQR complex catalyzes the reduction of ubiquinone-1 to ubiquinol by two successive reactions, coupled with the transport of Na(+) ions from the cytoplasm to the periplasm. NqrA to NqrE are probably involved in the second step, the conversion of ubisemiquinone to ubiquinol. The chain is Na(+)-translocating NADH-quinone reductase subunit B from Vibrio vulnificus (strain CMCP6).